Consider the following 1003-residue polypeptide: Methyl-CpG-binding domain protein 6 (1003 aa).

The MBD domain occupies 11 to 81 (DRAGGPVATS…KVFNFDPLAP (71 aa)). The required for interaction with ASXL1/2/3 stretch occupies residues 57–68 (DGTCKCGLECPL). 3 disordered regions span residues 120 to 219 (TCSH…PPPA), 238 to 664 (VPSD…PLLF), and 683 to 1003 (ATLD…KLAP). Pro residues-rich tracts occupy residues 140 to 155 (PGPP…PPTT) and 268 to 287 (TPPP…PASQ). 3 stretches are compositionally biased toward low complexity: residues 297-308 (LPLVLGPLGGAP), 319-328 (LASSLLSAAA), and 348-361 (AQAP…SLRP). Residues 391–407 (APAPVPQPFSLPEPSQP) are compositionally biased toward pro residues. Residues 408–426 (ILPSVLSLLGLPTPGPSHS) show a composition bias toward low complexity. Over residues 439–456 (LPPPPTLSSGSPPQPRHP) the composition is skewed to pro residues. Composition is skewed to low complexity over residues 460–498 (SLPG…PSEG) and 531–548 (GAGF…LSLG). A compositionally biased stretch (pro residues) spans 570–589 (QPPPEPLLPPPGGPGPPLAP). The segment covering 590-602 (GEPEGPSLLVASL) has biased composition (low complexity). A compositionally biased stretch (pro residues) spans 603–617 (LPPPPSDLLPPPSAP). The span at 618-633 (PSNLLASFLPLLALGP) shows a compositional bias: low complexity. The span at 635 to 649 (AGDGEGSAEGAGGPS) shows a compositional bias: gly residues. Positions 650 to 662 (GEPFSGLGDLSPL) are enriched in low complexity. Positions 707–718 (TSSVTTATTDPG) are enriched in polar residues. Low complexity-rich tracts occupy residues 732–761 (PPQL…LPSL), 768–778 (LLSGQLGLQLL), and 788–798 (SEASSPLACLL). A compositionally biased stretch (pro residues) spans 805–817 (PEQPEAPCLPPES). The segment covering 818–837 (PASALEPEPARPPLSALAPP) has biased composition (low complexity). Positions 947–958 (RKSRRGRRRKYN) are enriched in basic residues. The span at 959–969 (PTRNSNSSRQD) shows a compositional bias: polar residues. Positions 989–1003 (RPGRPAKNKRRKLAP) are enriched in basic residues.

Core component of the polycomb repressive deubiquitinase (PR-DUB) complex, at least composed of BAP1, one of ASXL1, ASXL2 or (probably) ASXL3, and one of MBD5 or MBD6. Distinct combinations of ASXL and MBD proteins may preferentially bind specific histone modification marks. The PR-DUB core associates with a number of accessory proteins, including FOXK1, FOXK2, KDM1B, HCFC1 and OGT; KDM1B specifically associates with ASXL2 PR-DUB complexes. Interacts (via MBD domain) with ASXL1, ASXL2 and ASXL3 (via PHD domain); the interaction is probably direct, mediates association with other PR-DUB complex core components.

The protein localises to the nucleus. It localises to the chromosome. Its function is as follows. Non-catalytic component of the polycomb repressive deubiquitinase (PR-DUB) complex, a complex that specifically mediates deubiquitination of histone H2A monoubiquitinated at 'Lys-120' (H2AK119ub1). Important for stability of PR-DUB components and stimulating its ubiquitinase activity. As part of the PR-DUB complex, associates with chromatin enriched in histone marks H3K4me1, H3K4me3, and H3K27Ac, but not in H3K27me3. MBD5 and MBD6 containing complexes associate with distinct chromatin regions enriched in genes involved in different pathways. Heterochromatin recruitment is not mediated by DNA methylation. The PR-DUB complex is an epigenetic regulator of gene expression, including genes involved in development, cell communication, signaling, cell proliferation and cell viability; may promote cancer cell growth. The chain is Methyl-CpG-binding domain protein 6 (MBD6) from Homo sapiens (Human).